Consider the following 253-residue polypeptide: uncharacterized protein (253 aa).

Residues 62–78 (WCSIGWSIGALIIFLVY) form a helical membrane-spanning segment. The span at 141-158 (TTPQTTTPEIPSSTEPQE) shows a compositional bias: low complexity. The interval 141-225 (TTPQTTTPEI…HDNQPLEERH (85 aa)) is disordered. Over residues 200-216 (NVEDEPPPNKPEEEEDH) the composition is skewed to acidic residues.

The protein resides in the host membrane. This is an uncharacterized protein from Aedes vexans (Inland floodwater mosquito).